The chain runs to 669 residues: DNA ligase (669 aa).

Residue 35-39 (DFEYD) participates in NAD(+) binding. A disordered region spans residues 52–71 (YPEWDSPDSPTHRVGSDKTE). The span at 61-71 (PTHRVGSDKTE) shows a compositional bias: basic and acidic residues. Residues 84–85 (SL) and E115 each bind NAD(+). K117 acts as the N6-AMP-lysine intermediate in catalysis. Residues R138, E175, K290, and K314 each coordinate NAD(+). Zn(2+) is bound by residues C408, C411, C426, and C432. The region spanning 590–669 (AVSNRLAGKT…EEEFLRLIEE (80 aa)) is the BRCT domain.

This sequence belongs to the NAD-dependent DNA ligase family. LigA subfamily. Requires Mg(2+) as cofactor. The cofactor is Mn(2+).

The enzyme catalyses NAD(+) + (deoxyribonucleotide)n-3'-hydroxyl + 5'-phospho-(deoxyribonucleotide)m = (deoxyribonucleotide)n+m + AMP + beta-nicotinamide D-nucleotide.. Functionally, DNA ligase that catalyzes the formation of phosphodiester linkages between 5'-phosphoryl and 3'-hydroxyl groups in double-stranded DNA using NAD as a coenzyme and as the energy source for the reaction. It is essential for DNA replication and repair of damaged DNA. The protein is DNA ligase of Porphyromonas gingivalis (strain ATCC BAA-308 / W83).